The chain runs to 451 residues: GABA transporter 1 (451 aa).

Helical transmembrane passes span 35-55, 57-77, 115-135, 153-173, 182-202, 222-242, 262-282, 308-328, 356-376, 382-402, and 411-431; these read CGFH…PYAF, FLGW…TFYS, VGPI…LLGG, LFEF…FPSF, LSLL…IYIG, VFGI…GIIP, MCYL…YWAF, FIFL…VVYL, LVVR…LPFF, LLGA…FFNF, and FIFW…VIAM.

This sequence belongs to the amino acid/polyamine transporter 2 family. Amino acid/auxin permease (AAAP) (TC 2.A.18.2) subfamily. In terms of tissue distribution, highly expressed in flowers and at lower levels in roots, leaves and stems.

The protein resides in the cell membrane. Its function is as follows. High affinity gamma-aminobutyric acid (GABA) transporter probably involved in GABA uptake into cells. When expressed in a heterologous system (Xenopus oocytes), imports GABA, butylamine, beta- and L-Alanine, 5-aminovaleric acid, 6-aminocaproic acid and 8-aminocaprylic acid, but does not mediate the transport of proline or glycine betaine. This is GABA transporter 1 (GAT1) from Arabidopsis thaliana (Mouse-ear cress).